A 67-amino-acid chain; its full sequence is Coiled-coil domain-containing protein 179 (67 aa).

Disordered regions lie at residues 1 to 32 and 47 to 67; these read MCLR…RQSV and RKLG…ILWT. The stretch at 27–53 forms a coiled coil; it reads STRQSVEKRINYMQNLQKEKRKLGKRF.

This is Coiled-coil domain-containing protein 179 (Ccdc179) from Mus musculus (Mouse).